A 484-amino-acid chain; its full sequence is Ribosome biogenesis protein YTM1 (484 aa).

The interval V13 to R95 is ubiquitin-like (UBL) domain. WD repeat units lie at residues S122–S161, G168–G206, G216–A255, I288–T328, S330–S373, G379–Q419, and G448–E484.

This sequence belongs to the WD repeat WDR12/YTM1 family. Component of the NOP7 complex, composed of ERB1, NOP7 and YTM1. The complex is held together by ERB1, which interacts with NOP7 via its N-terminal domain and with YTM1 via a high-affinity interaction between the seven-bladed beta-propeller domains of the 2 proteins. The NOP7 complex associates with the 66S pre-ribosome. Interacts (via UBL domain) with MDN1 (via VWFA/MIDAS domain).

The protein resides in the nucleus. Its subcellular location is the nucleolus. It localises to the nucleoplasm. Its function is as follows. Component of the NOP7 complex, which is required for maturation of the 25S and 5.8S ribosomal RNAs and formation of the 60S ribosome. This chain is Ribosome biogenesis protein YTM1, found in Chaetomium globosum (strain ATCC 6205 / CBS 148.51 / DSM 1962 / NBRC 6347 / NRRL 1970) (Soil fungus).